Here is a 105-residue protein sequence, read N- to C-terminus: Cyclotide vibi-J (105 aa).

The N-terminal stretch at 1–9 is a signal peptide; sequence AAFALPALA. Residues 10–71 constitute a propeptide that is removed on maturation; it reads TSFEKDFITH…KSSNSINALG (62 aa). Positions 72–102 form a cross-link, cyclopeptide (Gly-Asn); sequence GTFPCGESCVWIPCISKVIGCACKSKVCYKN. 3 disulfide bridges follow: cysteine 76-cysteine 92, cysteine 80-cysteine 94, and cysteine 85-cysteine 99. The propeptide occupies 103 to 105; that stretch reads SLA.

In terms of processing, this is a cyclic peptide.

In terms of biological role, probably participates in a plant defense mechanism. This is Cyclotide vibi-J from Viola biflora (Yellow wood violet).